Here is a 495-residue protein sequence, read N- to C-terminus: Prenylcysteine oxidase 1-like (495 aa).

Positions 1–22 (MARAAPLLAVLATVLTTAAAGG) are cleaved as a signal peptide. N-linked (GlcNAc...) asparagine glycans are attached at residues N185 and N343.

The protein belongs to the prenylcysteine oxidase family. Requires FAD as cofactor.

The protein localises to the secreted. In terms of biological role, likely to have oxidoreductase activity. Required in the mevalonate pathway to regulate prenylation and enhances the bactericidal activity of neutrophils. This Mus musculus (Mouse) protein is Prenylcysteine oxidase 1-like (Pcyox1l).